Consider the following 307-residue polypeptide: Ribosomal protein L11 methyltransferase (307 aa).

Residues Thr-162, Gly-183, Asp-205, and Asn-244 each coordinate S-adenosyl-L-methionine.

This sequence belongs to the methyltransferase superfamily. PrmA family.

The protein resides in the cytoplasm. It catalyses the reaction L-lysyl-[protein] + 3 S-adenosyl-L-methionine = N(6),N(6),N(6)-trimethyl-L-lysyl-[protein] + 3 S-adenosyl-L-homocysteine + 3 H(+). Methylates ribosomal protein L11. This Bordetella parapertussis (strain 12822 / ATCC BAA-587 / NCTC 13253) protein is Ribosomal protein L11 methyltransferase.